The chain runs to 83 residues: Translational regulator CsrA (83 aa).

This sequence belongs to the CsrA/RsmA family. In terms of assembly, homodimer; the beta-strands of each monomer intercalate to form a hydrophobic core, while the alpha-helices form wings that extend away from the core.

It localises to the cytoplasm. Its function is as follows. A translational regulator that binds mRNA to regulate translation initiation and/or mRNA stability. Usually binds in the 5'-UTR at or near the Shine-Dalgarno sequence preventing ribosome-binding, thus repressing translation. Its main target seems to be the major flagellin gene, while its function is anatagonized by FliW. The chain is Translational regulator CsrA from Nocardioides sp. (strain ATCC BAA-499 / JS614).